The sequence spans 178 residues: tRNA (cytidine(56)-2'-O)-methyltransferase (178 aa).

Residues Leu-84, 109 to 113 (GAEKV), and 127 to 134 (IGNQPHSE) each bind S-adenosyl-L-methionine.

It belongs to the aTrm56 family. In terms of assembly, homodimer.

It is found in the cytoplasm. The catalysed reaction is cytidine(56) in tRNA + S-adenosyl-L-methionine = 2'-O-methylcytidine(56) in tRNA + S-adenosyl-L-homocysteine + H(+). In terms of biological role, specifically catalyzes the AdoMet-dependent 2'-O-ribose methylation of cytidine at position 56 in tRNAs. The polypeptide is tRNA (cytidine(56)-2'-O)-methyltransferase (Methanococcoides burtonii (strain DSM 6242 / NBRC 107633 / OCM 468 / ACE-M)).